A 402-amino-acid chain; its full sequence is Succinyl-CoA--D-citramalate CoA-transferase (402 aa).

D174 (nucleophile) is an active-site residue.

It belongs to the CoA-transferase III family. In terms of assembly, homodimer.

The catalysed reaction is (3R)-citramalate + succinyl-CoA = (3R)-citramalyl-CoA + succinate. It carries out the reaction (R)-malate + succinyl-CoA = (R)-malyl-CoA + succinate. Functionally, involved in the 3-hydroxypropionate cycle used for autotrophic carbon dioxide fixation, and in the glyoxylate assimilation cycle used to regenerate acetyl-CoA and produce pyruvate as universal precursor for biosynthesis. Catalyzes the transfer of CoA moiety from succinyl-CoA to D-citramalate to yield citramalyl-CoA. The protein is Succinyl-CoA--D-citramalate CoA-transferase of Chloroflexus aurantiacus (strain ATCC 29366 / DSM 635 / J-10-fl).